The primary structure comprises 227 residues: MTKRAIVLLSGGLDSATVLAMARAQGFETYALSMRYGQRHSSELEAARRVAAALGATRHEIIDLDLRRFGGSALTDDALAVPTDGASDGIPVTYVPARNTIMLSLALGWAEAVGGRDLFFGANAVDYSGYPDCRPEYVAAYETLANLATKAGVEGDRFRVHAPIIDMTKGEIIRAGIALGVDYSLTVSCYQADDDGRACGVCDSCRIRRAGFEAAGVPDPTRYQAAA.

9–19 (LSGGLDSATVL) contributes to the ATP binding site. Residues Cys-189, Cys-199, Cys-202, and Cys-205 each coordinate Zn(2+).

This sequence belongs to the QueC family. Zn(2+) is required as a cofactor.

The enzyme catalyses 7-carboxy-7-deazaguanine + NH4(+) + ATP = 7-cyano-7-deazaguanine + ADP + phosphate + H2O + H(+). Its pathway is purine metabolism; 7-cyano-7-deazaguanine biosynthesis. In terms of biological role, catalyzes the ATP-dependent conversion of 7-carboxy-7-deazaguanine (CDG) to 7-cyano-7-deazaguanine (preQ(0)). This Cupriavidus necator (strain ATCC 17699 / DSM 428 / KCTC 22496 / NCIMB 10442 / H16 / Stanier 337) (Ralstonia eutropha) protein is 7-cyano-7-deazaguanine synthase.